We begin with the raw amino-acid sequence, 635 residues long: Threonine--tRNA ligase (635 aa).

The 61-residue stretch at 1–61 (MVSIRLPDGS…DRDASLAIVT (61 aa)) folds into the TGS domain. Residues 242-533 (DHRKLGKQLD…LIEHHAGAMP (292 aa)) are catalytic. The Zn(2+) site is built by cysteine 333, histidine 384, and histidine 510.

Belongs to the class-II aminoacyl-tRNA synthetase family. In terms of assembly, homodimer. Requires Zn(2+) as cofactor.

It is found in the cytoplasm. It catalyses the reaction tRNA(Thr) + L-threonine + ATP = L-threonyl-tRNA(Thr) + AMP + diphosphate + H(+). Functionally, catalyzes the attachment of threonine to tRNA(Thr) in a two-step reaction: L-threonine is first activated by ATP to form Thr-AMP and then transferred to the acceptor end of tRNA(Thr). Also edits incorrectly charged L-seryl-tRNA(Thr). This is Threonine--tRNA ligase from Burkholderia vietnamiensis (strain G4 / LMG 22486) (Burkholderia cepacia (strain R1808)).